A 442-amino-acid polypeptide reads, in one-letter code: UPF0597 protein HRM2_02820 (442 aa).

It belongs to the UPF0597 family.

This is UPF0597 protein HRM2_02820 from Desulforapulum autotrophicum (strain ATCC 43914 / DSM 3382 / VKM B-1955 / HRM2) (Desulfobacterium autotrophicum).